The chain runs to 581 residues: MSTTSASEAYVDDNSSWDSFHLDARLVQAIDQLGFEHPTLIQASAIPLALEEKRDIIAKASTGSGKTGAYVIPIIHNLLTDAEVESGNHHIKSIILVPTRELSNQVLQFVEKLLVYSNNRINAINLSANLSDQVVNSLLMNKPEIIISTPAKLIQVLEKNANKDLIDLSTVRNLTIDEVDLVLSYGYLEDLQKLETYLPIKKNLQTFLMSATVNDDLNDLKTRFCSRPAILKLNDEESAQNKLIQYYARTTEFDKFLLAYVIFKLNLIKGKTLVFVNNIDRGYRLKLFLEQFGIRCCILNSELPINSRLHIVEEYNKNVYNLLIATDETNDFTVEKDEQQQEESQDKKASSAKTKQSKKSKKQKKDTEYGVSRGVDFRNVACVLNFDLPTTSKAYIHRIGRTARAGKAGMALSFVLPIKEVGKHKTASLSTAKKDEKILRRIVKQQSKNGFEIKPYQFDMKQVEGFRYRSEDAFRAVTQTAIREARIKELKNELINSDKLKRFFEENPQDLASLRHDKELHPTRVQSHLKRVPDYLLPESARQDPKKIGFVPFHKNKVHKNRKKKPTGRKADPLKSFKNRK.

Residues 15–43 (SSWDSFHLDARLVQAIDQLGFEHPTLIQA) carry the Q motif motif. The Helicase ATP-binding domain occupies 47 to 231 (PLALEEKRDI…TRFCSRPAIL (185 aa)). 60–67 (ASTGSGKT) is a binding site for ATP. The DEAD box motif lies at 177 to 180 (DEVD). The Helicase C-terminal domain maps to 260-461 (YVIFKLNLIK…EIKPYQFDMK (202 aa)). Residues 334–349 (VEKDEQQQEESQDKKA) show a composition bias toward basic and acidic residues. Disordered regions lie at residues 334 to 368 (VEKD…KDTE) and 546 to 581 (KKIG…KNRK). Basic residues-rich tracts occupy residues 355 to 364 (KQSKKSKKQK) and 554 to 568 (HKNK…KPTG).

Belongs to the DEAD box helicase family. DDX56/DBP9 subfamily.

The protein localises to the nucleus. It is found in the nucleolus. The catalysed reaction is ATP + H2O = ADP + phosphate + H(+). Functionally, ATP-binding RNA helicase involved in the biogenesis of 60S ribosomal subunits and is required for the normal formation of 25S and 5.8S rRNAs. This chain is ATP-dependent RNA helicase DBP9 (DBP9), found in Scheffersomyces stipitis (strain ATCC 58785 / CBS 6054 / NBRC 10063 / NRRL Y-11545) (Yeast).